The following is a 154-amino-acid chain: Ribonuclease H (154 aa).

Positions 1 to 142 (MLKHIDLYTD…CDELARDAAS (142 aa)) constitute an RNase H type-1 domain. Residues Asp10, Glu48, Asp70, and Asp134 each contribute to the Mg(2+) site. Residues 126–147 (GHPENERCDELARDAASGKELA) show a composition bias toward basic and acidic residues. The tract at residues 126 to 154 (GHPENERCDELARDAASGKELAEDTGYQP) is disordered.

It belongs to the RNase H family. In terms of assembly, monomer. Mg(2+) serves as cofactor.

Its subcellular location is the cytoplasm. It catalyses the reaction Endonucleolytic cleavage to 5'-phosphomonoester.. Endonuclease that specifically degrades the RNA of RNA-DNA hybrids. The chain is Ribonuclease H from Aeromonas salmonicida (strain A449).